Reading from the N-terminus, the 49-residue chain is MPTWLTTIFSVVIVLAIFLYFGLLIYQKIRQIRGKKKDKKEIERKESNK.

Residues 5-25 form a helical membrane-spanning segment; it reads LTTIFSVVIVLAIFLYFGLLI.

Belongs to the plectrovirus ORF12 protein family.

It localises to the host membrane. This is an uncharacterized protein from Spiroplasma virus SpV1-R8A2 B (SpV1).